The chain runs to 29 residues: Cytochrome b6-f complex subunit 8 (29 aa).

A helical membrane pass occupies residues 3–23 (IDVLGWVALLVVFTWSIAMVV).

Belongs to the PetN family. As to quaternary structure, the 4 large subunits of the cytochrome b6-f complex are cytochrome b6, subunit IV (17 kDa polypeptide, PetD), cytochrome f and the Rieske protein, while the 4 small subunits are PetG, PetL, PetM and PetN. The complex functions as a dimer.

It is found in the cellular thylakoid membrane. Functionally, component of the cytochrome b6-f complex, which mediates electron transfer between photosystem II (PSII) and photosystem I (PSI), cyclic electron flow around PSI, and state transitions. In Mastigocladus laminosus (Fischerella sp.), this protein is Cytochrome b6-f complex subunit 8.